The chain runs to 554 residues: Protein SINE2 (554 aa).

An ARMADILLO-type fold region spans residues D17 to A290. Disordered regions lie at residues C306 to R332, N411 to R442, and E465 to D487. The span at S311 to S321 shows a compositional bias: low complexity. Over residues L322–R332 the composition is skewed to basic and acidic residues. Over residues N419–R431 the composition is skewed to basic residues. Residues E465–T485 are compositionally biased toward low complexity. A KASH domain is found at L509–T554. Residues L522 to L542 form a helical membrane-spanning segment. Positions L551–T554 match the Required for nuclear localization motif.

As to quaternary structure, interacts with SUN1 and SUN2. Expressed in epidermal cells, mesophyll cells, trichomes and root cells.

Its subcellular location is the nucleus membrane. In terms of biological role, plays a role in innate immunity against the oomycete pathogen A.arabidopsidis (Hpa). This Arabidopsis thaliana (Mouse-ear cress) protein is Protein SINE2.